The following is a 379-amino-acid chain: 23S rRNA (uracil(747)-C(5))-methyltransferase RlmC (379 aa).

Residues C3, C11, C14, and C86 each contribute to the [4Fe-4S] cluster site. Residues Q211, F240, E262, and N310 each contribute to the S-adenosyl-L-methionine site. C337 functions as the Nucleophile in the catalytic mechanism.

This sequence belongs to the class I-like SAM-binding methyltransferase superfamily. RNA M5U methyltransferase family. RlmC subfamily.

The enzyme catalyses uridine(747) in 23S rRNA + S-adenosyl-L-methionine = 5-methyluridine(747) in 23S rRNA + S-adenosyl-L-homocysteine + H(+). Functionally, catalyzes the formation of 5-methyl-uridine at position 747 (m5U747) in 23S rRNA. The protein is 23S rRNA (uracil(747)-C(5))-methyltransferase RlmC of Halothiobacillus neapolitanus (strain ATCC 23641 / c2) (Thiobacillus neapolitanus).